The following is a 705-amino-acid chain: Bifunctional arginine dihydrolase/ornithine cyclodeaminase ArgZ (705 aa).

Residues 10-269 form an arginine dihydrolase region; the sequence is CPPDHYDVDY…GAAKCLTLRV (260 aa). Asn22, Asn71, Arg90, Arg139, His168, Asp170, Ala258, and Cys264 together coordinate L-arginine. L-ornithine is bound by residues Asn22, Asn71, Arg90, Arg139, and His168. The Proton donor/acceptor role is filled by His168. Residues Ala258 and Cys264 each coordinate L-ornithine. Cys264 serves as the catalytic Nucleophile. Residues 285–695 are ornithine cyclodeaminase; the sequence is SRVIRMEGHL…SLLVRQLQQL (411 aa). Positions 525, 526, 604, 636, 637, 638, 639, 657, 680, and 681 each coordinate NAD(+).

This sequence in the N-terminal section; belongs to the DDAH family. It in the C-terminal section; belongs to the AgrE/ArgZ ornithine cyclodeaminase family. As to quaternary structure, homotetramer. NAD(+) serves as cofactor.

It carries out the reaction L-arginine + 2 H2O + 2 H(+) = L-ornithine + 2 NH4(+) + CO2. It catalyses the reaction L-ornithine = L-proline + NH4(+). Arginine dihydrolase activity does not require a metal cofactor. Bifunctional enzyme involved in a cyanobacterial arginine utilization pathway that enables cellular adaptation to nitrogen fluctuations. Catalyzes the hydrolysis of arginine to ornithine, with the release of ammonia and carbon dioxide. Then, probably catalyzes the conversion of ornithine to proline, with the release of ammonia. Is highly specific for arginine and cannot hydrolyze citrulline, dimethylarginine and other amino acids. The chain is Bifunctional arginine dihydrolase/ornithine cyclodeaminase ArgZ from Synechocystis sp. (strain ATCC 27184 / PCC 6803 / Kazusa).